The chain runs to 147 residues: Spermidine export protein MdtJ (147 aa).

4 helical membrane-spanning segments follow: residues 1-21 (MIYW…TLSM), 31-51 (TGHI…SLAV), 54-74 (VALG…ITIF), and 81-101 (ETLS…ILLV). A compositionally biased stretch (basic residues) spans 105 to 117 (TRKPKQPNRHRGN). The tract at residues 105 to 147 (TRKPKQPNRHRGNRPPSVQGLKTQTTGHHKGVAVESGEHHAAA) is disordered.

This sequence belongs to the drug/metabolite transporter (DMT) superfamily. Small multidrug resistance (SMR) (TC 2.A.7.1) family. MdtJ subfamily. Forms a complex with MdtI.

It is found in the cell inner membrane. Functionally, catalyzes the excretion of spermidine. The sequence is that of Spermidine export protein MdtJ from Yersinia pseudotuberculosis serotype O:3 (strain YPIII).